The following is a 156-amino-acid chain: Small ribosomal subunit protein uS7 (156 aa).

The protein belongs to the universal ribosomal protein uS7 family. Part of the 30S ribosomal subunit. Contacts proteins S9 and S11.

Its function is as follows. One of the primary rRNA binding proteins, it binds directly to 16S rRNA where it nucleates assembly of the head domain of the 30S subunit. Is located at the subunit interface close to the decoding center, probably blocks exit of the E-site tRNA. The chain is Small ribosomal subunit protein uS7 from Lawsonia intracellularis (strain PHE/MN1-00).